Here is a 323-residue protein sequence, read N- to C-terminus: Methionyl-tRNA formyltransferase (323 aa).

A (6S)-5,6,7,8-tetrahydrofolate-binding site is contributed by serine 117 to proline 120.

Belongs to the Fmt family.

It carries out the reaction L-methionyl-tRNA(fMet) + (6R)-10-formyltetrahydrofolate = N-formyl-L-methionyl-tRNA(fMet) + (6S)-5,6,7,8-tetrahydrofolate + H(+). Functionally, attaches a formyl group to the free amino group of methionyl-tRNA(fMet). The formyl group appears to play a dual role in the initiator identity of N-formylmethionyl-tRNA by promoting its recognition by IF2 and preventing the misappropriation of this tRNA by the elongation apparatus. The sequence is that of Methionyl-tRNA formyltransferase from Acidovorax ebreus (strain TPSY) (Diaphorobacter sp. (strain TPSY)).